The chain runs to 166 residues: Phosphopantetheine adenylyltransferase (166 aa).

Serine 11 contributes to the substrate binding site. Residues 11–12 and histidine 19 contribute to the ATP site; that span reads SF. Substrate contacts are provided by lysine 43, valine 80, and arginine 94. ATP-binding positions include 95 to 97, glutamate 105, and 130 to 136; these read GLR and VRTVTAT.

The protein belongs to the bacterial CoaD family. In terms of assembly, homohexamer. Requires Mg(2+) as cofactor.

The protein localises to the cytoplasm. It carries out the reaction (R)-4'-phosphopantetheine + ATP + H(+) = 3'-dephospho-CoA + diphosphate. It functions in the pathway cofactor biosynthesis; coenzyme A biosynthesis; CoA from (R)-pantothenate: step 4/5. In terms of biological role, reversibly transfers an adenylyl group from ATP to 4'-phosphopantetheine, yielding dephospho-CoA (dPCoA) and pyrophosphate. The protein is Phosphopantetheine adenylyltransferase of Chelativorans sp. (strain BNC1).